We begin with the raw amino-acid sequence, 202 residues long: Alcohol dehydrogenase-related 31 kDa protein (202 aa).

11–34 (YVADCGGIALETSKVLMTKNIAKL) contributes to the NAD(+) binding site. Ser139 contacts substrate. Tyr152 functions as the Proton acceptor in the catalytic mechanism.

It belongs to the short-chain dehydrogenases/reductases (SDR) family.

The protein is Alcohol dehydrogenase-related 31 kDa protein (Adhr) of Drosophila erecta (Fruit fly).